Consider the following 285-residue polypeptide: MTTTDRIAAAFARVSEAGRAAALIPYIAAGDPSPQATVPLMHALVRAGADLVELGVPFSDPMADGPVVQRAAERAIAQGVGLRRVLELVADFRRDDSVTPVVLMGYANPIERMGQRAFAQAAQAAGVDGVLVVDYPPEEVDEFAAMLAEAGVAPIFLLAPTSTEARIEAIGRVARGYVYYVSLKGVTGAGSLDTDDVARKLALIRRHVHIPVGVGFGIRDAASAQRIAAHADAVVIGSKLIETMEQAGAQAGADQKNEAAIAAAQQWLHTIRLALDDVKRENAPA.

Catalysis depends on proton acceptor residues glutamate 53 and aspartate 64.

The protein belongs to the TrpA family. Tetramer of two alpha and two beta chains.

The enzyme catalyses (1S,2R)-1-C-(indol-3-yl)glycerol 3-phosphate + L-serine = D-glyceraldehyde 3-phosphate + L-tryptophan + H2O. The protein operates within amino-acid biosynthesis; L-tryptophan biosynthesis; L-tryptophan from chorismate: step 5/5. In terms of biological role, the alpha subunit is responsible for the aldol cleavage of indoleglycerol phosphate to indole and glyceraldehyde 3-phosphate. The polypeptide is Tryptophan synthase alpha chain (Bordetella bronchiseptica (strain ATCC BAA-588 / NCTC 13252 / RB50) (Alcaligenes bronchisepticus)).